The sequence spans 375 residues: Putative F-box/kelch-repeat protein At3g24610 (375 aa).

Residues 1-27 are disordered; the sequence is MSNEAPEVEPHSKRRKKEASPSSSSGF. The F-box domain maps to 25-71; it reads SGFLQSLPEAVAMICLARVSRLDHAALSLVSKSCRSMVLSPELYQTR. One copy of the Kelch repeat lies at 138–183; it reads KINVWGGCKYKHYYDWGEVFDPKTQTWADMSIPKPVREEKIYVVDS.

The sequence is that of Putative F-box/kelch-repeat protein At3g24610 from Arabidopsis thaliana (Mouse-ear cress).